Reading from the N-terminus, the 172-residue chain is Large ribosomal subunit protein uL10 (172 aa).

The protein belongs to the universal ribosomal protein uL10 family. As to quaternary structure, part of the ribosomal stalk of the 50S ribosomal subunit. The N-terminus interacts with L11 and the large rRNA to form the base of the stalk. The C-terminus forms an elongated spine to which L12 dimers bind in a sequential fashion forming a multimeric L10(L12)X complex.

Forms part of the ribosomal stalk, playing a central role in the interaction of the ribosome with GTP-bound translation factors. The sequence is that of Large ribosomal subunit protein uL10 from Dinoroseobacter shibae (strain DSM 16493 / NCIMB 14021 / DFL 12).